The chain runs to 355 residues: Probable dual-specificity RNA methyltransferase RlmN (355 aa).

Glutamate 89 acts as the Proton acceptor in catalysis. One can recognise a Radical SAM core domain in the interval 95 to 322 (YENRKTVCLS…KRLGVPTSIR (228 aa)). A disulfide bond links cysteine 102 and cysteine 333. Residues cysteine 109, cysteine 113, and cysteine 116 each contribute to the [4Fe-4S] cluster site. S-adenosyl-L-methionine is bound by residues 159–160 (GE), serine 191, 214–216 (SLH), and asparagine 290. Cysteine 333 (S-methylcysteine intermediate) is an active-site residue.

The protein belongs to the radical SAM superfamily. RlmN family. It depends on [4Fe-4S] cluster as a cofactor.

It localises to the cytoplasm. The enzyme catalyses adenosine(2503) in 23S rRNA + 2 reduced [2Fe-2S]-[ferredoxin] + 2 S-adenosyl-L-methionine = 2-methyladenosine(2503) in 23S rRNA + 5'-deoxyadenosine + L-methionine + 2 oxidized [2Fe-2S]-[ferredoxin] + S-adenosyl-L-homocysteine. It catalyses the reaction adenosine(37) in tRNA + 2 reduced [2Fe-2S]-[ferredoxin] + 2 S-adenosyl-L-methionine = 2-methyladenosine(37) in tRNA + 5'-deoxyadenosine + L-methionine + 2 oxidized [2Fe-2S]-[ferredoxin] + S-adenosyl-L-homocysteine. Functionally, specifically methylates position 2 of adenine 2503 in 23S rRNA and position 2 of adenine 37 in tRNAs. The polypeptide is Probable dual-specificity RNA methyltransferase RlmN (Thermus thermophilus (strain ATCC BAA-163 / DSM 7039 / HB27)).